The sequence spans 405 residues: Arginine deiminase (405 aa).

The active-site Amidino-cysteine intermediate is C395.

This sequence belongs to the arginine deiminase family.

Its subcellular location is the cytoplasm. The enzyme catalyses L-arginine + H2O = L-citrulline + NH4(+). The protein operates within amino-acid degradation; L-arginine degradation via ADI pathway; carbamoyl phosphate from L-arginine: step 1/2. The polypeptide is Arginine deiminase (Rhodococcus erythropolis (strain PR4 / NBRC 100887)).